The sequence spans 433 residues: Phosphomethylpyrimidine synthase (433 aa).

Substrate-binding positions include N66, M94, Y123, H162, 184–186 (SRG), 225–228 (DALR), and E264. H268 serves as a coordination point for Zn(2+). A substrate-binding site is contributed by Y291. H332 is a Zn(2+) binding site. Positions 408, 411, and 415 each coordinate [4Fe-4S] cluster.

This sequence belongs to the ThiC family. Requires [4Fe-4S] cluster as cofactor.

The catalysed reaction is 5-amino-1-(5-phospho-beta-D-ribosyl)imidazole + S-adenosyl-L-methionine = 4-amino-2-methyl-5-(phosphooxymethyl)pyrimidine + CO + 5'-deoxyadenosine + formate + L-methionine + 3 H(+). Its pathway is cofactor biosynthesis; thiamine diphosphate biosynthesis. In terms of biological role, catalyzes the synthesis of the hydroxymethylpyrimidine phosphate (HMP-P) moiety of thiamine from aminoimidazole ribotide (AIR) in a radical S-adenosyl-L-methionine (SAM)-dependent reaction. The protein is Phosphomethylpyrimidine synthase of Saccharolobus islandicus (strain M.16.27) (Sulfolobus islandicus).